Here is a 36-residue protein sequence, read N- to C-terminus: Photosystem I reaction center subunit VIII (36 aa).

A helical transmembrane segment spans residues 4-24; sequence FSLPSILVPLVGLVLPAIAMA.

It belongs to the PsaI family.

It is found in the plastid. The protein resides in the chloroplast thylakoid membrane. Its function is as follows. May help in the organization of the PsaL subunit. This is Photosystem I reaction center subunit VIII from Piper cenocladum (Ant piper).